The sequence spans 179 residues: Large ribosomal subunit protein uL5 (179 aa).

Belongs to the universal ribosomal protein uL5 family. Part of the 50S ribosomal subunit; part of the 5S rRNA/L5/L18/L25 subcomplex. Contacts the 5S rRNA and the P site tRNA. Forms a bridge to the 30S subunit in the 70S ribosome.

This is one of the proteins that bind and probably mediate the attachment of the 5S RNA into the large ribosomal subunit, where it forms part of the central protuberance. In the 70S ribosome it contacts protein S13 of the 30S subunit (bridge B1b), connecting the 2 subunits; this bridge is implicated in subunit movement. Contacts the P site tRNA; the 5S rRNA and some of its associated proteins might help stabilize positioning of ribosome-bound tRNAs. The chain is Large ribosomal subunit protein uL5 from Dehalococcoides mccartyi (strain ATCC BAA-2266 / KCTC 15142 / 195) (Dehalococcoides ethenogenes (strain 195)).